A 531-amino-acid polypeptide reads, in one-letter code: Transmembrane protein 266 (531 aa).

Over 1-102 (MALAASFNMT…VFLLSASLNS (102 aa)) the chain is Cytoplasmic. Residues 103–123 (FLVACVILVVILLTLELLIDI) traverse the membrane as a helical segment. Topologically, residues 124-129 (KLLQFS) are extracellular. The chain crosses the membrane as a helical span at residues 130-150 (SAFQFAGVIHWISLVILSVFF). Residues 151–169 (SETVLRIVVLGIWDYIENK) are Cytoplasmic-facing. A helical membrane pass occupies residues 170 to 190 (IEVFDGAVIILSLAPMVASTV). Over 191–199 (ANGPRSPWD) the chain is Extracellular. The chain crosses the membrane as a helical span at residues 200–220 (AISLIIMLRIWRVKRVIDAYV). At 221–531 (LPVKLEMEMV…EQKLHRVPEA (311 aa)) the chain is on the cytoplasmic side. Positions 231–251 (IQQYEKAKVIQDEQLERLTQI) form a coiled coil. Residues 380-477 (NGTGATSESA…PAGSAQTSPE (98 aa)) form a disordered region. Positions 383–412 (GATSESASRSSVTRAQSDSSQTLGSSTDCS) are enriched in polar residues. Positions 421–431 (EPGPSPLPLPP) are enriched in pro residues.

In terms of assembly, homodimer; disulfide-linked.

It localises to the cell membrane. Its subcellular location is the cell projection. The protein resides in the dendrite. The protein localises to the perikaryon. In terms of biological role, voltage-sensor protein present on the post-synaptic side of glutamatergic mossy fibers and granule cells in the cerebellum. Despite the presence of a voltage-sensor segment, does not form a functional ion channel and its precise role remains unclear. Undergoes both rapid and slow structural rearrangements in response to changes in voltage. Contains a zinc-binding site that can regulate the slow conformational transition. The sequence is that of Transmembrane protein 266 from Macaca fascicularis (Crab-eating macaque).